The primary structure comprises 355 residues: Cobalt-precorrin-5B C(1)-methyltransferase (355 aa).

Belongs to the CbiD family.

It carries out the reaction Co-precorrin-5B + S-adenosyl-L-methionine = Co-precorrin-6A + S-adenosyl-L-homocysteine. The protein operates within cofactor biosynthesis; adenosylcobalamin biosynthesis; cob(II)yrinate a,c-diamide from sirohydrochlorin (anaerobic route): step 6/10. Catalyzes the methylation of C-1 in cobalt-precorrin-5B to form cobalt-precorrin-6A. This chain is Cobalt-precorrin-5B C(1)-methyltransferase, found in Sulfolobus acidocaldarius (strain ATCC 33909 / DSM 639 / JCM 8929 / NBRC 15157 / NCIMB 11770).